The sequence spans 375 residues: MDLSNRRNPLRDLSFPPPPPPPIFHRASSTGTSFPILAVAVIGILATAFLLVSYYVFVIKCCLNWHRIDILGRFSLSRRRRNDQDPLMVYSPELRSRGLDESVIRAIPIFKFKKRYDQNDGVFTGEGEEEEEKRSQECSVCLSEFQDEEKLRIIPNCSHLFHIDCIDVWLQNNANCPLCRTRVSCDTSFPPDRVSAPSTSPENLVMLRGENEYVVIELGSSIGSDRDSPRHGRLLTGQERSNSGYLLNENTQNSISPSPKKLDRGGLPRKFRKLHKMTSMGDECIDIRRGKDEQFGSIQPIRRSISMDSSADRQLYLAVQEAIRKNREVLVVGDGGGCSSSSGNVSNSKVKRSFFSFGSSRRSRSSSKLPLYFEP.

The interval 1–20 (MDLSNRRNPLRDLSFPPPPP) is disordered. The chain crosses the membrane as a helical span at residues 39 to 59 (VAVIGILATAFLLVSYYVFVI). The RING-type; atypical zinc-finger motif lies at 138–180 (CSVCLSEFQDEEKLRIIPNCSHLFHIDCIDVWLQNNANCPLCR). 2 disordered regions span residues 223–266 (GSDR…DRGG) and 356–375 (SFGS…YFEP). Over residues 238-257 (QERSNSGYLLNENTQNSISP) the composition is skewed to polar residues.

The protein belongs to the RING-type zinc finger family. ATL subfamily.

Its subcellular location is the membrane. The catalysed reaction is S-ubiquitinyl-[E2 ubiquitin-conjugating enzyme]-L-cysteine + [acceptor protein]-L-lysine = [E2 ubiquitin-conjugating enzyme]-L-cysteine + N(6)-ubiquitinyl-[acceptor protein]-L-lysine.. It functions in the pathway protein modification; protein ubiquitination. The protein is RING-H2 finger protein ATL16 (ATL16) of Arabidopsis thaliana (Mouse-ear cress).